The sequence spans 393 residues: Beta-ureidopropionase (393 aa).

In terms of domain architecture, CN hydrolase spans 72–344 (VRVGLVQNRI…DGLLVTELNL (273 aa)). Catalysis depends on Glu119, which acts as the Proton acceptor. Lys196 (proton donor) is an active-site residue. The active-site Nucleophile is Cys233. At Ser378 the chain carries Phosphoserine.

The protein belongs to the carbon-nitrogen hydrolase superfamily. BUP family. In terms of assembly, homodimer, homotetramer, homooctamer; can also form higher homooligomers. The N-terminus is blocked. As to expression, detected in liver (at protein level).

The protein localises to the cytoplasm. The catalysed reaction is 3-(carbamoylamino)propanoate + H2O + 2 H(+) = beta-alanine + NH4(+) + CO2. The enzyme catalyses 3-(carbamoylamino)-2-methylpropanoate + H2O + 2 H(+) = (R)-3-amino-2-methylpropanoate + NH4(+) + CO2. It functions in the pathway amino-acid biosynthesis; beta-alanine biosynthesis. With respect to regulation, allosteric enzyme with positive cooperativity toward the substrate N-carbamoyl-beta-alanine at low substrate concentrations (below 12 nM). Displays no cooperativity at substrate levels above 12 nM. Functionally, catalyzes a late step in pyrimidine degradation. Converts N-carbamoyl-beta-alanine (3-ureidopropanoate) into beta-alanine, ammonia and carbon dioxide. Likewise, converts N-carbamoyl-beta-aminoisobutyrate (3-ureidoisobutyrate) into beta-aminoisobutyrate, ammonia and carbon dioxide. The sequence is that of Beta-ureidopropionase (Upb1) from Rattus norvegicus (Rat).